The following is a 379-amino-acid chain: Glucose-insensitive transcription protein 7 (379 aa).

The region spanning 181–272 (SNRIRYDWSQ…VSEIKWEALV (92 aa)) is the CS domain. Residues 292 to 379 (ASGNTKNKAK…PPQGMEPKKF (88 aa)) enclose the SGS domain. A disordered region spans residues 345–379 (SYTESNGTALSTNWKDVKSKTFETKPPQGMEPKKF). Residues 346–358 (YTESNGTALSTNW) show a composition bias toward polar residues.

Its function is as follows. Involved in cyclic AMP (cAMP) pathway, possibly by participating in the assembly or the conformational activation of specific multiprotein complexes. This is Glucose-insensitive transcription protein 7 (git7) from Schizosaccharomyces pombe (strain 972 / ATCC 24843) (Fission yeast).